The following is a 365-amino-acid chain: Dehydroprecondylocarpine acetate synthase (365 aa).

Positions 105, 108, 111, and 119 each coordinate Zn(2+). N-linked (GlcNAc...) asparagine glycosylation is found at Asn-142 and Asn-147. NADP(+) is bound by residues Leu-194, Gly-196, Leu-197, Ser-216, Thr-217, Thr-218, Lys-221, Leu-279, Ala-281, Ser-303, Ala-305, and Arg-350.

It belongs to the zinc-containing alcohol dehydrogenase family. As to quaternary structure, homodimer. Interaction with catharanthine synthase (CS) and tabersonine synthase (TS). It depends on Zn(2+) as a cofactor.

It localises to the cytoplasm. It is found in the cytosol. The enzyme catalyses dihydroprecondylocarpine acetate + NADP(+) = precondylocarpine acetate + NADPH + H(+). It functions in the pathway alkaloid biosynthesis. Component of the seco-iridoid and derivatives monoterpenoid indole alkaloids (MIAs, e.g. vinblastine, catharanthine, tabersonine, vincadifformine, vindoline, vincristine, quinine and strychnine) biosynthesis pathway. Catalyzes the non-canonical 1,4-reduction of an alpha,beta-unsaturated iminium moiety; by contrast with the classic alcohol dehydrogenase mechanism, this reaction does not require a catalytic zinc or proton relay. Converts precondylocarpine acetate to dihydroprecondylocarpine acetate, that is spontaneously converted into dehydrosecodine intermediate, precursor of angryline. May also trigger the non-stereoselective 1,4-reduction reaction at C15 of dehydrosecodine leading to the production of secodine, a precursor of vincadifformine. The chain is Dehydroprecondylocarpine acetate synthase from Catharanthus roseus (Madagascar periwinkle).